A 587-amino-acid polypeptide reads, in one-letter code: Formate--tetrahydrofolate ligase (587 aa).

73 to 80 is an ATP binding site; sequence TPLGEGKS.

Belongs to the formate--tetrahydrofolate ligase family.

The enzyme catalyses (6S)-5,6,7,8-tetrahydrofolate + formate + ATP = (6R)-10-formyltetrahydrofolate + ADP + phosphate. It functions in the pathway one-carbon metabolism; tetrahydrofolate interconversion. The sequence is that of Formate--tetrahydrofolate ligase from Syntrophobacter fumaroxidans (strain DSM 10017 / MPOB).